A 7073-amino-acid chain; its full sequence is Replicase polyprotein 1ab (7073 aa).

Over 1–2202 (MESLVLGVNE…NYVKSPKFSK (2202 aa)) the chain is Cytoplasmic. The region spanning 12-127 (THVQLSLPVL…YRNVLLRKNG (116 aa)) is the CoV Nsp1 globular domain. The BetaCoV Nsp1 C-terminal domain occupies 148-179 (ELGTDPIEDYEQNWNTKHGSGALRELTRELNG). Positions 183–456 (TRYVDNNFCG…NEDLLEILSR (274 aa)) constitute a CoV Nsp2 N-terminal domain. Zn(2+) contacts are provided by C200, C231, H234, H236, C323, C326, C341, C344, C370, C373, H382, and C416. Residues 200–236 (CIKDFLARAGKSMCTLSEQLDYIESKRGVYCCRDHEH) form a C2H2 region. The segment at 323–344 (CNHCDEVSWQTCDFLKATCEHC) is C4. The tract at residues 370–416 (CPACQDPEIGPEHSVADYHNHSNIETRLRKGGRTRCFGGCVFAYVGC) is C2HC. The region spanning 458–688 (RVNINIVGDF…IDVVNKALEM (231 aa)) is the CoV Nsp2 middle domain. One can recognise a CoV Nsp2 C-terminal domain in the interval 690-818 (IDQVTIAGAK…TNNVFRLKGG (129 aa)). In terms of domain architecture, Ubiquitin-like 1 spans 822–930 (KGVTFGEDTV…MYCSFYPPDE (109 aa)). Disordered regions lie at residues 972–1003 (RVEEEEEEDWLDDTTEQSEIEPEPEPTPEEPV) and 1175–1198 (RVEAPKQEEPPNTEDSKTEEKSVV). Residues 974 to 999 (EEEEEEDWLDDTTEQSEIEPEPEPTP) show a composition bias toward acidic residues. The 167-residue stretch at 1003–1169 (VNQFTGYLKL…LYEQVVMDYL (167 aa)) folds into the Macro 1 domain. Macro domains follow at residues 1207-1335 (KIKA…LPSE) and 1343-1470 (ILGT…TSSS). The 67-residue stretch at 1472 to 1538 (TSEEHFVETV…SLDKLKSLLS (67 aa)) folds into the DPUP domain. The Ubiquitin-like 2 domain occupies 1542 to 1597 (VKTIKVFTTVDNTNLHTQLVDMSMTYGQQFGPTYLDGADVTKIKPHVNHEGKTFFV). The Peptidase C16 domain maps to 1611–1875 (YYHTLDESFL…YTEIEPKLDG (265 aa)). C1651 (for PL-PRO activity) is an active-site residue. Residues C1729, C1732, C1764, and C1766 each contribute to the Zn(2+) site. The C4-type zinc finger occupies 1729 to 1766 (CKHCGQKTTTLTGVEAVMYMGTLSYDNLKTGVSIPCVC). Active-site for PL-PRO activity residues include H1812 and D1826. In terms of domain architecture, Nucleic acid-binding spans 1888–1998 (PIDLVPTQPL…CLWSTKPVDT (111 aa)). Residues 2023–2132 (PTSEEVVENP…LGQAAITTSN (110 aa)) form the G2M domain. The chain crosses the membrane as a helical span at residues 2203–2223 (LFTIAMWLLLLSICLGSLICV). Residues 2203 to 2324 (LFTIAMWLLL…FYLLGLSAIM (122 aa)) form an HD1 region. A 3Ecto domain is found at 2224-2294 (TAAFGVLLSN…QVTISSYKLD (71 aa)). The Lumenal segment spans residues 2224-2303 (TAAFGVLLSN…DLTILGLAAE (80 aa)). Cystine bridges form between C2240-C2268 and C2259-C2265. Residues 2304–2324 (WVLAYMLFTKFFYLLGLSAIM) traverse the membrane as a helical segment. Residues 2325–2754 (QVFFGYFASH…TCFKLMLKAT (430 aa)) lie on the Cytoplasmic side of the membrane. Residues 2372-2462 (KSYVHIMDGC…QFKRPINPTD (91 aa)) form a Y1 region. One can recognise a CoV Nsp3 Y domain in the interval 2372 to 2740 (KSYVHIMDGC…ITTKISLKGG (369 aa)). Zn(2+) is bound by residues H2376, C2381, C2386, C2389, C2422, H2425, C2429, and C2432. The ZF1 stretch occupies residues 2376–2389 (HIMDGCTSSTCMMC). Positions 2422 to 2432 (CKTHNWNCLNC) are ZF2. Residues 2463 to 2557 (QSSYIVDSVA…LLDQALVSDV (95 aa)) are Y2. The tract at residues 2463–2740 (QSSYIVDSVA…ITTKISLKGG (278 aa)) is coV-Y. The interval 2558–2639 (GDSTEVSVKM…ECLKLSHHSD (82 aa)) is Y3. Positions 2640–2740 (LEVTGDSCNN…ITTKISLKGG (101 aa)) are Y4. A helical transmembrane segment spans residues 2755–2775 (LLCVLAALVCYIVMPVHTLSI). An HD2 region spans residues 2755 to 3125 (LLCVLAALVC…WITAIYVFCI (371 aa)). The Lumenal portion of the chain corresponds to 2776 to 3021 (HDGYTNEIIG…VQPVGALDVS (246 aa)). The helical transmembrane segment at 3022 to 3042 (ASVVAGGIIAILVTCAAYYFM) threads the bilayer. Topologically, residues 3043 to 3076 (KFRRVFGEYNHVVAANALLFLMSFTILCLVPAYS) are cytoplasmic. A helical membrane pass occupies residues 3077 to 3097 (FLPGVYSVFYLYLTFYFTNDV). At 3098–3104 (SFLAHLQ) the chain is on the lumenal side. Residues 3105–3125 (WFAMFSPIVPFWITAIYVFCI) form a helical membrane-spanning segment. The Cytoplasmic portion of the chain corresponds to 3126–3563 (SLKHCHWFFN…KGTHHWMLLT (438 aa)). Residues 3142 to 3240 (VMFNGVTFST…QTSITSAVLQ (99 aa)) form the Nsp4C domain. The region spanning 3241–3546 (SGFRKMAFPS…VRQCSGVTFQ (306 aa)) is the Peptidase C30 domain. Active-site for 3CL-PRO activity residues include H3281 and C3385. Residues 3564 to 3584 (FLTSLLILVQSTQWSLFFFVY) form a helical membrane-spanning segment. The segment at 3564 to 3776 (FLTSLLILVQ…CCCYFGLFCL (213 aa)) is HD3. Position 3585 (E3585) is a topological domain, lumenal. The chain crosses the membrane as a helical span at residues 3586–3606 (NAFLPFTLGIMAIAACAMLLV). The Cytoplasmic segment spans residues 3607-3611 (KHKHA). Residues 3612 to 3632 (FLCLFLLPSLATVAYFNMVYM) traverse the membrane as a helical segment. The Lumenal segment spans residues 3633–3657 (PASWVMRIMTWLELADTSLSGYRLK). A helical transmembrane segment spans residues 3658–3678 (DCVMYASALVLLILMTARTVY). At 3679-3727 (DDAARRVWTLMNVITLVYKVYYGNALDQAISMWALVISVTSNYSGVVTT) the chain is on the cytoplasmic side. The chain crosses the membrane as a helical span at residues 3728-3748 (IMFLARAIVFVCVEYYPLLFI). Residues 3749–3755 (TGNTLQC) lie on the Lumenal side of the membrane. The chain crosses the membrane as a helical span at residues 3756 to 3776 (IMLVYCFLGYCCCCYFGLFCL). Residues 3777–7073 (LNRYFRLTLG…VVSSDILVNN (3297 aa)) lie on the Cytoplasmic side of the membrane. The region spanning 3837-3919 (SKMSDVKCTS…EMLDNRATLQ (83 aa)) is the RdRp Nsp7 cofactor domain. The RdRp Nsp8 cofactor domain occupies 3920–4117 (AIASEFSSLP…LRANSAVKLQ (198 aa)). Residues 4118–4230 (NNELSPVALR…GSLAATVRLQ (113 aa)) enclose the Nsp9 ssRNA-binding domain. The ExoN/MTase coactivator domain maps to 4231-4369 (AGNATEVPAN…CDQLREPLMQ (139 aa)). Zn(2+)-binding residues include C4304, C4307, H4313, C4320, C4347, C4350, C4358, and C4360. 2 zinc fingers span residues 4304-4320 (CLYCRCHIDHPNPKGFC) and 4347-4360 (CTVCGMWKGYGCSC). Residues 4376–4630 (FLNRVCGVSA…AAESHMDADL (255 aa)) form the NiRAN domain. The Mn(2+) site is built by N4578 and D4587. In terms of domain architecture, Nsp12 Interface spans 4635-4733 (IKWDLLKYDF…HNQDVNLHSS (99 aa)). 5 residues coordinate Zn(2+): H4664, C4670, C4675, C4679, and C4856. In terms of domain architecture, Nsp12 RNA-dependent RNA polymerase spans 4734-5301 (RLSFKELLVY…AMYTPHTVLQ (568 aa)). Positions 4736–4950 (SFKELLVYAA…HQKLLKSIAA (215 aa)) are rdRp Fingers N-ter. The segment at 4951–4989 (TRGATVVIGTSKFYGGWHNMLKTVYSDVETPHLMGWDYP) is rdRp Palm N-ter. In terms of domain architecture, RdRp catalytic spans 4981 to 5143 (PHLMGWDYPK…CYNSNYAAQG (163 aa)). A rdRp Fingers C-ter region spans residues 4990 to 5048 (KCDRAMPNMLRIMASLVLARKHNTCCNLSHRFYRLANECAQVLSEMVMCGGSLYVKPGG). H5011, C5014, and C5015 together coordinate Zn(2+). A rdRp Palm C-ter region spans residues 5049-5184 (TSSGDATTAY…TKGPHEFCSQ (136 aa)). Catalysis depends on residues S5128, D5129, and D5130. A rdRp Thumb region spans residues 5185 to 5301 (HTMLVKQGDD…AMYTPHTVLQ (117 aa)). A CV ZBD domain is found at 5302–5414 (AVGACVLCNS…TDFNAIATCD (113 aa)). C5306, C5309, C5317, C5320, C5327, C5330, H5334, H5340, C5351, C5356, C5373, and H5376 together coordinate Zn(2+). In terms of domain architecture, (+)RNA virus helicase ATP-binding spans 5558 to 5739 (NISDEFSSNV…MKTIGPDMFL (182 aa)). An ATP-binding site is contributed by 5583 to 5590 (GPPGTGKS). Residues 5740–5909 (GTCRRCPAEI…TLQAENVTGL (170 aa)) form the (+)RNA virus helicase C-terminal domain. The ExoN domain maps to 5974–6189 (MFITREEAIR…RCLAVHECFV (216 aa)). Catalysis depends on residues D5992, E5994, and E6093. The Mg(2+) site is built by E5994 and E6093. Zn(2+)-binding residues include C6109, C6112, C6128, H6131, H6159, C6163, and H6166. Residues H6170 and D6175 contribute to the active site. 2 residues coordinate Mg(2+): H6170 and D6175. C6181 provides a ligand contact to Zn(2+). The 232-residue stretch at 6198–6429 (YPIIGDELRV…NLWNTFTRLQ (232 aa)) folds into the N7-MTase domain. Residue 6233–6239 (DIGNPKA) participates in S-adenosyl-L-methionine binding. Residues 6316–6330 (CDGGSLYVNKHAFHT) are gpppA-binding. Residues C6354, C6375, C6386, and H6389 each contribute to the Zn(2+) site. Positions 6430–6490 (SLENVAYNVV…NVAFELWAKR (61 aa)) constitute a Nsp15 N-terminal oligomerization domain. Positions 6491-6616 (NIKPVPEIKI…YFKKVDGIIQ (126 aa)) constitute an AV-Nsp11N/CoV-Nsp15M domain. The NendoU domain maps to 6633-6772 (KPRSQMETDF…KDGHVETFYP (140 aa)). Active-site residues include H6663, H6678, K6718, K6821, D6905, K6945, and E6978. The Nidovirus-type SAM-dependent 2'-O-MTase domain maps to 6777–7071 (SQAWQPGVAM…RVVVSSDILV (295 aa)).

It belongs to the coronaviruses polyprotein 1ab family. As to quaternary structure, interacts with host PHB and PHB2. In terms of assembly, interacts with papain-like protease nsp3 and non-structural protein 6. Monomer. Homodimer. Only the homodimer shows catalytic activity. As to quaternary structure, interacts with nsp8 and nsp12 to form the replication-transcription complex (RTC): nsp12, nsp7, two subunits of nsp8, and up to two subunits of nsp13. Eight copies of nsp7 and eight copies of nsp8 assemble to form a heterohexadecamer dsRNA-encircling ring structure. In terms of assembly, interacts with nsp7, nsp13 and nsp12 to form the replication-transcription complex (RTC): nsp12, nsp7, two subunits of nsp8, and up to two subunits of nsp13. Eight copies of nsp7 and eight copies of nsp8 assemble to form a heterohexadecamer dsRNA-encircling ring structure. Interacts with ORF6 protein. Homodimer. Interacts with nsp12. As to quaternary structure, homododecamer. Interacts with proofreading exoribonuclease nsp14 and 2'-O-methyltransferase nsp16; these interactions enhance nsp14 and nsp16 enzymatic activities. In terms of assembly, interacts with nsp7 and nsp8 to form the replication-transcription complex (RTC): nsp12, nsp7, two subunits of nsp8, and up to two subunits of nsp13. Interacts with nsp9. Interacts with nsp8 to form the replication-transcription complex (RTC): nsp12, nsp7, two subunits of nsp8, and up to two subunits of nsp13. As to quaternary structure, interacts (via N-terminus) with host DDX1. Interacts with non-structural protein 10. In terms of assembly, homohexamer. Interacts with nsp10. Requires Zn(2+) as cofactor. Mn(2+) serves as cofactor. The cofactor is Mg(2+). Post-translationally, specific enzymatic cleavages in vivo by its own proteases yield mature proteins. 3C-like proteinase nsp5 liberates nsps 6-16 from the polyprotein. Papain-like and 3C-like proteinases are autocatalytically processed.

The protein resides in the host cytoplasm. It localises to the host endosome. Its subcellular location is the host membrane. The protein localises to the host Golgi apparatus. It is found in the host perinuclear region. The protein resides in the host endoplasmic reticulum. It localises to the host endoplasmic reticulum-Golgi intermediate compartment. The enzyme catalyses RNA(n) + a ribonucleoside 5'-triphosphate = RNA(n+1) + diphosphate. The catalysed reaction is ATP + H2O = ADP + phosphate + H(+). It carries out the reaction TSAVLQ-|-SGFRK-NH2 and SGVTFQ-|-GKFKK the two peptides corresponding to the two self-cleavage sites of the SARS 3C-like proteinase are the two most reactive peptide substrates. The enzyme exhibits a strong preference for substrates containing Gln at P1 position and Leu at P2 position.. It catalyses the reaction Thiol-dependent hydrolysis of ester, thioester, amide, peptide and isopeptide bonds formed by the C-terminal Gly of ubiquitin (a 76-residue protein attached to proteins as an intracellular targeting signal).. The enzyme catalyses a 5'-end (N(7)-methyl 5'-triphosphoguanosine)-ribonucleoside in mRNA + S-adenosyl-L-methionine = a 5'-end (N(7)-methyl 5'-triphosphoguanosine)-(2'-O-methyl-ribonucleoside) in mRNA + S-adenosyl-L-homocysteine + H(+). The catalysed reaction is uridylyl-uridylyl-ribonucleotide-RNA = a 3'-end uridylyl-2',3'-cyclophospho-uridine-RNA + a 5'-end dephospho-ribonucleoside-RNA. It carries out the reaction a 5'-end (5'-triphosphoguanosine)-ribonucleoside in mRNA + S-adenosyl-L-methionine = a 5'-end (N(7)-methyl 5'-triphosphoguanosine)-ribonucleoside in mRNA + S-adenosyl-L-homocysteine. It catalyses the reaction a 5'-end diphospho-ribonucleoside in mRNA + GTP + H(+) = a 5'-end (5'-triphosphoguanosine)-ribonucleoside in mRNA + diphosphate. Inhibited by Remdesivir (GS-5734). Functionally, multifunctional protein involved in the transcription and replication of viral RNAs. Contains the proteinases responsible for the cleavages of the polyprotein. Inhibits host translation by interacting with the 40S ribosomal subunit. The nsp1-40S ribosome complex further induces an endonucleolytic cleavage near the 5'UTR of host mRNAs, targeting them for degradation. Viral mRNAs are not susceptible to nsp1-mediated endonucleolytic RNA cleavage thanks to the presence of a 5'-end leader sequence and are therefore protected from degradation. By suppressing host gene expression, nsp1 facilitates efficient viral gene expression in infected cells and evasion from host immune response. May disrupt nuclear pore function by binding and displacing host NUP93. Its function is as follows. May play a role in the modulation of host cell survival signaling pathway by interacting with host PHB and PHB2. Indeed, these two proteins play a role in maintaining the functional integrity of the mitochondria and protecting cells from various stresses. In terms of biological role, responsible for the cleavages located at the N-terminus of the replicase polyprotein. In addition, PL-PRO possesses a deubiquitinating/deISGylating activity and processes both 'Lys-48'- and 'Lys-63'-linked polyubiquitin chains from cellular substrates. Plays a role in host membrane rearrangement that leads to creation of cytoplasmic double-membrane vesicles (DMV) necessary for viral replication. Nsp3, nsp4 and nsp6 together are sufficient to form DMV. Antagonizes innate immune induction of type I interferon by blocking the phosphorylation, dimerization and subsequent nuclear translocation of host IRF3. Also prevents host NF-kappa-B signaling. Functionally, plays a role in host membrane rearrangement that leads to creation of cytoplasmic double-membrane vesicles (DMV) necessary for viral replication. Alone appears incapable to induce membrane curvature, but together with nsp3 is able to induce paired membranes. Nsp3, nsp4 and nsp6 together are sufficient to form DMV. Cleaves the C-terminus of replicase polyprotein at 11 sites. Recognizes substrates containing the core sequence [ILMVF]-Q-|-[SGACN]. May cleave human NLRP1 in lung epithelial cells, thereby activating the NLRP1 inflammasome pathway. Also able to bind an ADP-ribose-1''-phosphate (ADRP). May cleave host ATP6V1G1 thereby modifying host vacuoles intracellular pH. Its function is as follows. Plays a role in host membrane rearrangement that leads to creation of cytoplasmic double-membrane vesicles (DMV) necessary for viral replication. Nsp3, nsp4 and nsp6 together are sufficient to form DMV. Plays a role in the initial induction of autophagosomes from host endoplasmic reticulum. Later, limits the expansion of these phagosomes that are no longer able to deliver viral components to lysosomes. In terms of biological role, forms a hexadecamer with nsp8 (8 subunits of each) that may participate in viral replication by acting as a primase. Alternatively, may synthesize substantially longer products than oligonucleotide primers. Functionally, forms a hexadecamer with nsp7 (8 subunits of each) that may participate in viral replication by acting as a primase. Alternatively, may synthesize substantially longer products than oligonucleotide primers. Forms a primer, NSP9-pU, which is utilized by the polymerase for the initiation of RNA chains. Interacts with ribosome signal recognition particle RNA (SRP). Together with NSP8, suppress protein integration into the cell membrane, thereby disrupting host immune defenses. Its function is as follows. Plays a pivotal role in viral transcription by stimulating both nsp14 3'-5' exoribonuclease and nsp16 2'-O-methyltransferase activities. Therefore plays an essential role in viral mRNAs cap methylation. In terms of biological role, RNA-directed RNA polymerase that catalyzes the transcription of viral genomic and subgenomic RNAs. Acts in complex with nsp7 and nsp8 to transcribe both the minus and positive strands of genomic RNA. The kinase-like NiRAN domain of NSP12 attaches one or more nucleotides to the amino terminus of NSP9, forming a covalent RNA-protein intermediate that serves as transcription/replication primer. Subgenomic RNAs (sgRNAs) are formed by discontinuous transcription: The polymerase has the ability to pause at transcription-regulating sequences (TRS) and jump to the leader TRS, resulting in a major deletion. This creates a series of subgenomic RNAs that are replicated, transcribed and translated. In addition, Nsp12 is a subunit of the viral RNA capping enzyme that catalyzes the RNA guanylyltransferase reaction for genomic and sub-genomic RNAs. Subsequently, the NiRAN domain transfers RNA to GDP, and forms the core cap structure GpppA-RNA. Functionally, multi-functional protein with a zinc-binding domain in N-terminus displaying RNA and DNA duplex-unwinding activities with 5' to 3' polarity. Activity of helicase is dependent on magnesium. Plays a role in viral RNA synthesis through two distinct activities. The N7-guanine methyltransferase activity plays a role in the formation of the cap structure GpppA-RNA. The proofreading exoribonuclease reduces the sensitivity of the virus to RNA mutagens during replication. This activity acts on both ssRNA and dsRNA in a 3'-5' direction. Its function is as follows. Plays a role in viral transcription/replication and prevents the simultaneous activation of host cell dsRNA sensors, such as MDA5/IFIH1, OAS, and PKR. Acts by degrading the 5'-polyuridines generated during replication of the poly(A) region of viral genomic and subgenomic RNAs. Catalyzes a two-step reaction in which a 2'3'-cyclic phosphate (2'3'-cP) is first generated by 2'-O transesterification, which is then hydrolyzed to a 3'-phosphate (3'-P). If not degraded, poly(U) RNA would hybridize with poly(A) RNA tails and activate host dsRNA sensors. In terms of biological role, methyltransferase that mediates mRNA cap 2'-O-ribose methylation to the 5'-cap structure of viral mRNAs. N7-methyl guanosine cap is a prerequisite for binding of nsp16. Therefore plays an essential role in viral mRNAs cap methylation which is essential to evade immune system. This chain is Replicase polyprotein 1ab (rep), found in Severe acute respiratory syndrome coronavirus (SARS-CoV).